Consider the following 120-residue polypeptide: LOB domain-containing protein 8 (120 aa).

The 102-residue stretch at 8–109 (RPCCVCITKN…AYLHELEEKI (102 aa)) folds into the LOB domain.

It belongs to the LOB domain-containing protein family.

In Arabidopsis thaliana (Mouse-ear cress), this protein is LOB domain-containing protein 8 (LBD8).